The sequence spans 183 residues: Gene BABR protein 2 (183 aa).

In Babesia bovis, this protein is Gene BABR protein 2.